Reading from the N-terminus, the 404-residue chain is BRCA1-A complex subunit Abraxas 1 (404 aa).

The MPN domain occupies 7-161; that stretch reads YIRVSGFVLG…YAVYRSHGSQ (155 aa). The stretch at 219–268 forms a coiled coil; the sequence is MNNSLQGELKMACKKVEESERLVEKLLADVSDLRRMVNERKQELREISAD. The interval 339-404 is disordered; that stretch reads GRLGRGGGTS…NLDVSNSPVF (66 aa). Residues 391-404 show a composition bias toward polar residues; sequence RNGNNLDVSNSPVF. Residue S401 is modified to Phosphoserine. Residues 401 to 404 carry the pSXXF motif motif; it reads SPVF.

The protein belongs to the FAM175 family. Abraxas subfamily. In terms of assembly, component of the BRCA1-A complex. Component of the BRISC complex. Homodimer. Interacts directly (when phosphorylated at Ser-401) with brca1. The phosphorylated homodimer can interact directly with two brca1 chains, giving rise to a heterotetramer. Post-translationally, phosphorylation of Ser-401 of the pSXXF motif by ATM or ATR constitutes a specific recognition motif for the BRCT domain of BRCA1.

The protein localises to the nucleus. Its function is as follows. Involved in DNA damage response and double-strand break (DSB) repair. Component of the BRCA1-A complex, acting as a central scaffold protein that assembles the various components of the complex and mediates the recruitment of brca1. The BRCA1-A complex specifically recognizes 'Lys-63'-linked ubiquitinated histones H2A and H2AX at DNA lesion sites, leading to target the brca1-bard1 heterodimer to sites of DNA damage at DSBs. This complex also possesses deubiquitinase activity that specifically removes 'Lys-63'-linked ubiquitin on histones H2A and H2AX. This is BRCA1-A complex subunit Abraxas 1 from Salmo salar (Atlantic salmon).